The following is a 450-amino-acid chain: Benzene 1,2-dioxygenase subunit alpha (450 aa).

Residues 56-163 (LLGHETHIRK…VETYKGLIFA (108 aa)) enclose the Rieske domain. 4 residues coordinate [2Fe-2S] cluster: C96, H98, C116, and H119. 2 residues coordinate Fe cation: H222 and H228.

It belongs to the bacterial ring-hydroxylating dioxygenase alpha subunit family. In terms of assembly, this dioxygenase system consists of four proteins: the two subunits of the hydroxylase component (BedC1 and BedC2), a ferredoxin (BedB) and a ferredoxin reductase (BedA). The cofactor is [2Fe-2S] cluster. Requires Fe cation as cofactor.

It catalyses the reaction benzene + NADH + O2 + H(+) = cis-1,2-dihydrobenzene-1,2-diol + NAD(+). It functions in the pathway aromatic compound metabolism; benzene degradation; catechol from benzene: step 1/2. In Pseudomonas putida (Arthrobacter siderocapsulatus), this protein is Benzene 1,2-dioxygenase subunit alpha (bedC1).